A 358-amino-acid chain; its full sequence is MSATYTDLREKLQSLYRDSPKEVRKRKQPTSDTEEEEAASEPEEEEEARKVRSGIRQVRLFSPDECARIEAKIDEVVSRAEKGLYREHTVDRAPLRNKYFFGEGYTYGAQLQRRGPGQERLYPKGEVDEIPAWVNELVIRRLVEHRVIPEGFVNSAVINDYQPGGCIVSHVDPIHIFERPIVSVSFFSDSALCFGCKFQFKPIRVSEPVFFLPVQRGSVTVLSGYAADEITHCIRPQDIKERRAVVILRKTRTEAPRLEMKSLSSSYQPERLQGSNRQHILKPKRSHRKADPDAAHRPRILEMDKEENRRSVLLPKQRRRSHFSSENYWRRSHDYVDTYTETGEDDGSPVRKVKMRRH.

The segment at 1–50 (MSATYTDLREKLQSLYRDSPKEVRKRKQPTSDTEEEEAASEPEEEEEARK) is disordered. The span at 7-22 (DLREKLQSLYRDSPKE) shows a compositional bias: basic and acidic residues. Positions 32-46 (DTEEEEAASEPEEEE) are enriched in acidic residues. Tyrosine 105 is a catalytic residue. 2-oxoglutarate contacts are provided by asparagine 159, tyrosine 161, histidine 170, histidine 232, and arginine 243. Cysteines 196 and 233 form a disulfide. Disordered stretches follow at residues 259–312 (EMKS…RRSV) and 334–358 (DYVD…MRRH). Residues 262-278 (SLSSSYQPERLQGSNRQ) show a composition bias toward polar residues. The segment covering 279–288 (HILKPKRSHR) has biased composition (basic residues). The segment covering 289 to 310 (KADPDAAHRPRILEMDKEENRR) has biased composition (basic and acidic residues).

The protein belongs to the alkB family. In terms of assembly, monomer. The cofactor is Fe(2+).

The protein localises to the nucleus speckle. The enzyme catalyses an N(6)-methyladenosine in mRNA + 2-oxoglutarate + O2 = an adenosine in mRNA + formaldehyde + succinate + CO2. In terms of biological role, dioxygenase that specifically demethylates N(6)-methyladenosine (m6A) RNA, the most prevalent internal modification of messenger RNA (mRNA) in higher eukaryotes. Demethylates RNA by oxidative demethylation, which requires molecular oxygen, alpha-ketoglutarate and iron. Demethylation of m6A mRNA affects mRNA processing, translation and export. In Xenopus tropicalis (Western clawed frog), this protein is RNA demethylase ALKBH5 (alkbh5).